The following is a 175-amino-acid chain: Large ribosomal subunit protein uL10 (175 aa).

The protein belongs to the universal ribosomal protein uL10 family. As to quaternary structure, part of the ribosomal stalk of the 50S ribosomal subunit. The N-terminus interacts with L11 and the large rRNA to form the base of the stalk. The C-terminus forms an elongated spine to which L12 dimers bind in a sequential fashion forming a multimeric L10(L12)X complex.

Functionally, forms part of the ribosomal stalk, playing a central role in the interaction of the ribosome with GTP-bound translation factors. This is Large ribosomal subunit protein uL10 from Xylella fastidiosa (strain M23).